The primary structure comprises 349 residues: Alpha-centractin (349 aa).

M1 is subject to N-acetylmethionine.

This sequence belongs to the actin family. ARP1 subfamily. As to quaternary structure, part of the ACTR1A/ACTB filament around which the dynactin complex is built. The filament contains 8 copies of ACTR1A and 1 ACTB. Interacts with dynein and adapters such as BICD2. Interacts with BCCIP (isoform 2/alpha).

It is found in the cytoplasm. It localises to the cytoskeleton. The protein localises to the microtubule organizing center. Its subcellular location is the centrosome. The protein resides in the cell cortex. Functionally, part of the ACTR1A/ACTB filament around which the dynactin complex is built. The dynactin multiprotein complex activates the molecular motor dynein for ultra-processive transport along microtubules. The protein is Alpha-centractin (ACTR1A) of Sus scrofa (Pig).